Reading from the N-terminus, the 83-residue chain is MGIFQRLMKNKELIPLAFFISAAATGASSFALYALKKTDVVIDRKRNPEPWETVDPTQPQKLLTINQEWKPVEELQRVRRATR.

Belongs to the complex I NDUFA4 subunit family.

It localises to the nucleus. This Rattus norvegicus (Rat) protein is Normal mucosa of esophagus-specific gene 1 protein (Nmes1).